Here is a 182-residue protein sequence, read N- to C-terminus: MEQGKGLAVLILAIILLQGTLAQSIKGNHLVKVYDYQEDGSVLLTCDAEAKNITWFKDGKMIGFLTEDKKKWNLGSNAKDPRGMYQCKGSQNKSKPLQVYYRMCQNCIELNAATISGFLFAEIVSIFVLAVGVYFIAGQDGVRQSRASDKQTLLPNDQLYQPLKDREDDQYSHLQGNQLRRN.

Residues 1-22 (MEQGKGLAVLILAIILLQGTLA) form the signal peptide. The Extracellular portion of the chain corresponds to 23–116 (QSIKGNHLVK…CIELNAATIS (94 aa)). An Ig-like domain is found at 37–94 (QEDGSVLLTCDAEAKNITWFKDGKMIGFLTEDKKKWNLGSNAKDPRGMYQCKGSQNKS). Cysteine 46 and cysteine 87 are joined by a disulfide. N-linked (GlcNAc...) asparagine glycosylation is found at asparagine 52 and asparagine 92. A helical transmembrane segment spans residues 117–137 (GFLFAEIVSIFVLAVGVYFIA). The Cytoplasmic segment spans residues 138-182 (GQDGVRQSRASDKQTLLPNDQLYQPLKDREDDQYSHLQGNQLRRN). Phosphoserine is present on serine 145. Serine 148 carries the phosphoserine; by PKC modification. The region spanning 149–177 (DKQTLLPNDQLYQPLKDREDDQYSHLQGN) is the ITAM domain. A Di-leucine motif motif is present at residues 153–154 (LL).

The TCR-CD3 complex is composed of a CD3D/CD3E and a CD3G/CD3E heterodimers that preferentially associate with TCRalpha and TCRbeta, respectively, to form TCRalpha/CD3E/CD3G and TCRbeta/CD3G/CD3E trimers. In turn, the hexamer interacts with CD3Z homodimer to form the TCR-CD3 complex. Alternatively, TCRalpha and TCRbeta can be replaced by TCRgamma and TCRdelta. In terms of processing, phosphorylated on Tyr residues after T-cell receptor triggering by LCK in association with CD4/CD8. Phosphorylated also by PKC; leading to the TCR complex down-regulation. Post-translationally, phosphorylated on Tyr residues after T-cell receptor triggering by LCK in association with CD4/CD8.

Its subcellular location is the cell membrane. Part of the TCR-CD3 complex present on T-lymphocyte cell surface that plays an essential role in adaptive immune response. When antigen presenting cells (APCs) activate T-cell receptor (TCR), TCR-mediated signals are transmitted across the cell membrane by the CD3 chains CD3D, CD3E, CD3G and CD3Z. All CD3 chains contain immunoreceptor tyrosine-based activation motifs (ITAMs) in their cytoplasmic domain. Upon TCR engagement, these motifs become phosphorylated by Src family protein tyrosine kinases LCK and FYN, resulting in the activation of downstream signaling pathways. In addition to this role of signal transduction in T-cell activation, CD3G plays an essential role in the dynamic regulation of TCR expression at the cell surface. Indeed, constitutive TCR cycling is dependent on the di-leucine-based (diL) receptor-sorting motif present in CD3G. This Homo sapiens (Human) protein is T-cell surface glycoprotein CD3 gamma chain (CD3G).